A 371-amino-acid polypeptide reads, in one-letter code: tRNA-specific 2-thiouridylase MnmA (371 aa).

Residues 13–20 (GMSGGVDS) and M39 each bind ATP. An interaction with target base in tRNA region spans residues 99–101 (NPD). The active-site Nucleophile is C104. The cysteines at positions 104 and 200 are disulfide-linked. Residue G128 coordinates ATP. The tract at residues 150–152 (KDQ) is interaction with tRNA. Catalysis depends on C200, which acts as the Cysteine persulfide intermediate. The tract at residues 308–309 (RY) is interaction with tRNA.

This sequence belongs to the MnmA/TRMU family.

It is found in the cytoplasm. It catalyses the reaction S-sulfanyl-L-cysteinyl-[protein] + uridine(34) in tRNA + AH2 + ATP = 2-thiouridine(34) in tRNA + L-cysteinyl-[protein] + A + AMP + diphosphate + H(+). Its function is as follows. Catalyzes the 2-thiolation of uridine at the wobble position (U34) of tRNA, leading to the formation of s(2)U34. This chain is tRNA-specific 2-thiouridylase MnmA, found in Geobacillus thermodenitrificans (strain NG80-2).